The following is a 276-amino-acid chain: NH(3)-dependent NAD(+) synthetase (276 aa).

43–50 (GISGGVDS) contributes to the ATP binding site. A Mg(2+)-binding site is contributed by D49. R146 contributes to the deamido-NAD(+) binding site. Residue T166 coordinates ATP. E171 provides a ligand contact to Mg(2+). Deamido-NAD(+) is bound by residues K179 and D186. Positions 195 and 217 each coordinate ATP. Residue 266–267 (HK) coordinates deamido-NAD(+).

This sequence belongs to the NAD synthetase family. Homodimer.

It catalyses the reaction deamido-NAD(+) + NH4(+) + ATP = AMP + diphosphate + NAD(+) + H(+). It participates in cofactor biosynthesis; NAD(+) biosynthesis; NAD(+) from deamido-NAD(+) (ammonia route): step 1/1. Catalyzes the ATP-dependent amidation of deamido-NAD to form NAD. Uses ammonia as a nitrogen source. The chain is NH(3)-dependent NAD(+) synthetase from Shewanella piezotolerans (strain WP3 / JCM 13877).